A 552-amino-acid polypeptide reads, in one-letter code: Gamma-aminobutyric acid receptor subunit alpha-4 (552 aa).

Residues 1 to 35 (MVSVQKVPAIVLCSGVSLALLHVLCLATCLNESPG) form the signal peptide. Residues 36 to 259 (QNSKDEKLCP…FHLRRKMGYF (224 aa)) lie on the Extracellular side of the membrane. An N-linked (GlcNAc...) asparagine glycan is attached at N47. R100 provides a ligand contact to 4-aminobutanoate. N144 and N157 each carry an N-linked (GlcNAc...) asparagine glycan. T163 is a binding site for 4-aminobutanoate. A disulfide bond links C172 and C186. A helical transmembrane segment spans residues 260 to 280 (MIQTYIPCIMTVILSQVSFWI). Residues 281 to 284 (NKES) are Cytoplasmic-facing. Residues 285–305 (VPARTVFGITTVLTMTTLSIS) traverse the membrane as a helical segment. Topologically, residues 306–318 (ARHSLPKVSYATA) are extracellular. The helical transmembrane segment at 319–341 (MDWFIAVCFAFVFSALIEFAAVN) threads the bilayer. Over 342–515 (YFTNIQMQKA…PPPSGSGTSK (174 aa)) the chain is Cytoplasmic. Disordered regions lie at residues 353 to 436 (KKIS…NPFS), 448 to 470 (ARGLSSAASPSPHGTLQPAPLRS), and 486 to 513 (TTVNTTGVPGNVSATPPPSAPPPSGSGT). Polar residues predominate over residues 403–423 (RTEVGNHSSKTTAAQESSETT). Low complexity-rich tracts occupy residues 448–458 (ARGLSSAASPS) and 486–499 (TTVNTTGVPGNVSA). The segment covering 500 to 509 (TPPPSAPPPS) has biased composition (pro residues). The chain crosses the membrane as a helical span at residues 516-538 (IDKYARILFPVTFGAFNMVYWVV). The Extracellular portion of the chain corresponds to 539–552 (YLSKDTMEKSESLM).

This sequence belongs to the ligand-gated ion channel (TC 1.A.9) family. Gamma-aminobutyric acid receptor (TC 1.A.9.5) subfamily. GABRA4 sub-subfamily. In terms of assembly, heteropentamer, formed by a combination of alpha (GABRA1-6), beta (GABRB1-3), gamma (GABRG1-3), delta (GABRD), epsilon (GABRE), rho (GABRR1-3), pi (GABRP) and theta (GABRQ) chains, each subunit exhibiting distinct physiological and pharmacological properties. Expressed in the brain.

The protein localises to the cell membrane. Its subcellular location is the postsynaptic cell membrane. With respect to regulation, potentiated by histamine. Functionally, alpha subunit of the heteropentameric ligand-gated chloride channel gated by gamma-aminobutyric acid (GABA), a major inhibitory neurotransmitter in the brain. GABA-gated chloride channels, also named GABA(A) receptors (GABAAR), consist of five subunits arranged around a central pore and contain GABA active binding site(s) located at the alpha and beta subunit interface(s). Alpha-4/GABRA4 subunit often assembles with delta or gamma-2 subunits, in combination with beta subunits. When activated by GABA, GABAARs selectively allow the flow of chloride anions across the cell membrane down their electrochemical gradient. GABAARs containing alpha-4 are predominantly extrasynaptic, contributing to tonic inhibition in dentate granule cells and thalamic relay neurons. Extrasynaptic alpha-4-containing GABAARs control levels of excitability and network activity. GABAAR containing alpha-4-beta-3-delta subunits can simultaneously bind GABA and histamine where histamine binds at the interface of two neighboring beta subunits, which may be involved in the regulation of sleep and wakefulness. In Rattus norvegicus (Rat), this protein is Gamma-aminobutyric acid receptor subunit alpha-4.